The sequence spans 291 residues: G1/S-specific cyclin-D2 (291 aa).

Residues 261–291 (TRQQTQQRNSSKSVDELDQASTPTDVQDINL) form a disordered region. Positions 279–291 (QASTPTDVQDINL) are enriched in polar residues. Threonine 282 is subject to Phosphothreonine.

Belongs to the cyclin family. Cyclin D subfamily. In terms of assembly, interacts with the cdk4 and cdk6 protein kinases to form a serine/threonine kinase holoenzyme complex. The cyclin subunit imparts substrate specificity to the complex. In terms of processing, phosphorylation at Thr-282 by MAP kinases is required for ubiquitination and degradation by the DCX(AMBRA1) complex. Post-translationally, ubiquitinated by the DCX(AMBRA1) complex during the transition from G1 to S cell phase, leading to its degradation: ubiquitination is dependent on Thr-282 phosphorylation. The DCX(AMBRA1) complex represents the major regulator of CCND2 stability during the G1/S transition.

The protein resides in the nucleus. It is found in the cytoplasm. Its subcellular location is the nucleus membrane. Functionally, regulatory component of the cyclin D2-CDK4 (DC) complex that phosphorylates and inhibits members of the retinoblastoma (RB) protein family including RB1 and regulates the cell-cycle during G(1)/S transition. Phosphorylation of RB1 allows dissociation of the transcription factor E2F from the RB/E2F complex and the subsequent transcription of E2F target genes which are responsible for the progression through the G(1) phase. Hypophosphorylates RB1 in early G(1) phase. Cyclin D-CDK4 complexes are major integrators of various mitogenenic and antimitogenic signals. The polypeptide is G1/S-specific cyclin-D2 (ccnd2) (Xenopus laevis (African clawed frog)).